The primary structure comprises 216 residues: Octanoyltransferase (216 aa).

The BPL/LPL catalytic domain maps to 32–207 (SDSQDELWIV…TFSQIMGYQQ (176 aa)). Substrate contacts are provided by residues 71–78 (RGGQVTYH), 138–140 (SLG), and 151–153 (GLA). Cys-169 functions as the Acyl-thioester intermediate in the catalytic mechanism.

The protein belongs to the LipB family.

The protein localises to the cytoplasm. It carries out the reaction octanoyl-[ACP] + L-lysyl-[protein] = N(6)-octanoyl-L-lysyl-[protein] + holo-[ACP] + H(+). It participates in protein modification; protein lipoylation via endogenous pathway; protein N(6)-(lipoyl)lysine from octanoyl-[acyl-carrier-protein]: step 1/2. In terms of biological role, catalyzes the transfer of endogenously produced octanoic acid from octanoyl-acyl-carrier-protein onto the lipoyl domains of lipoate-dependent enzymes. Lipoyl-ACP can also act as a substrate although octanoyl-ACP is likely to be the physiological substrate. This is Octanoyltransferase from Shewanella frigidimarina (strain NCIMB 400).